The chain runs to 461 residues: tRNA modification GTPase MnmE (461 aa).

3 residues coordinate (6S)-5-formyl-5,6,7,8-tetrahydrofolate: R23, E88, and R127. A TrmE-type G domain is found at 223–382; the sequence is GLSTVIVGKP…IEDALAEMVY (160 aa). A K(+)-binding site is contributed by N233. GTP is bound by residues 233 to 238, 252 to 258, and 277 to 280; these read NVGKSS, TDVPGTT, and DTAG. Mg(2+) is bound at residue S237. The K(+) site is built by T252, V254, and T257. T258 is a Mg(2+) binding site. K461 is a (6S)-5-formyl-5,6,7,8-tetrahydrofolate binding site.

It belongs to the TRAFAC class TrmE-Era-EngA-EngB-Septin-like GTPase superfamily. TrmE GTPase family. Homodimer. Heterotetramer of two MnmE and two MnmG subunits. Requires K(+) as cofactor.

It is found in the cytoplasm. Its function is as follows. Exhibits a very high intrinsic GTPase hydrolysis rate. Involved in the addition of a carboxymethylaminomethyl (cmnm) group at the wobble position (U34) of certain tRNAs, forming tRNA-cmnm(5)s(2)U34. This is tRNA modification GTPase MnmE from Alkaliphilus oremlandii (strain OhILAs) (Clostridium oremlandii (strain OhILAs)).